The chain runs to 46 residues: Thymosin beta-a (46 aa).

The span at 21–30 (TNTAEKNTLP) shows a compositional bias: polar residues. A disordered region spans residues 21–46 (TNTAEKNTLPTKEDIDQEKKAAEGGK). Residues 31–46 (TKEDIDQEKKAAEGGK) show a composition bias toward basic and acidic residues.

It belongs to the thymosin beta family.

It localises to the cytoplasm. The protein localises to the cytoskeleton. In terms of biological role, plays an important role in the organization of the cytoskeleton. Binds to and sequesters actin monomers (G actin) and therefore inhibits actin polymerization. The protein is Thymosin beta-a of Cyprinus carpio (Common carp).